Reading from the N-terminus, the 636-residue chain is Ubiquitin-activating enzyme E1-like (636 aa).

Residues 28–33 (GAGGIG), aspartate 52, 60–63 (NLNR), lysine 76, and 121–126 (DNLAAR) each bind ATP. Residues cysteine 162 and cysteine 165 each coordinate Zn(2+). The active-site Glycyl thioester intermediate is cysteine 177. The Zn(2+) site is built by cysteine 435 and cysteine 438. Positions 581-636 (DGIVILDDDEGEITIDAEPINGSKKRPVDTEISEAPSNKRTKLVNEPTNSDIVELD) are disordered. Over residues 586-595 (LDDDEGEITI) the composition is skewed to acidic residues. A Nuclear localization signal motif is present at residues 619–622 (KRTK). Over residues 626-636 (EPTNSDIVELD) the composition is skewed to polar residues.

Belongs to the ubiquitin-activating E1 family. As to quaternary structure, heterodimer of UBA2 and AOS1. The complex binds SMT3. Multiubiquitinated in vivo.

The protein localises to the nucleus. The protein operates within protein modification; protein sumoylation. Its function is as follows. The dimeric enzyme acts as a SMT3 E1 ligase. It mediates ATP-dependent activation of SMT3 and formation of a thioester with a conserved cysteine residue on AOS1. The chain is Ubiquitin-activating enzyme E1-like (UBA2) from Saccharomyces cerevisiae (strain ATCC 204508 / S288c) (Baker's yeast).